We begin with the raw amino-acid sequence, 145 residues long: Class I hydrophobin rodE (145 aa).

4 disulfides stabilise this stretch: C43–C126, C59–C120, C60–C95, and C127–C140.

Belongs to the fungal hydrophobin family. In terms of assembly, self-assembles to form functional amyloid fibrils called rodlets. Self-assembly into fibrillar rodlets occurs spontaneously at hydrophobic:hydrophilic interfaces and the rodlets further associate laterally to form amphipathic monolayers.

Aerial growth, conidiation, and dispersal of filamentous fungi in the environment rely upon a capability of their secreting small amphipathic proteins called hydrophobins (HPBs) with low sequence identity. Class I can self-assemble into an outermost layer of rodlet bundles on aerial cell surfaces, conferring cellular hydrophobicity that supports fungal growth, development and dispersal; whereas Class II form highly ordered films at water-air interfaces through intermolecular interactions but contribute nothing to the rodlet structure. RodE is a class I hydrophobin that, unlike rodA, is not required for rodlet formation. The chain is Class I hydrophobin rodE from Aspergillus fumigatus (strain ATCC MYA-4609 / CBS 101355 / FGSC A1100 / Af293) (Neosartorya fumigata).